The primary structure comprises 1010 residues: Contactin-1 (1010 aa).

Residues 1–19 (MRFFISHLVTLCFIFCVAD) form the signal peptide. 6 Ig-like C2-type domains span residues 33 to 123 (PVFE…ATLS), 132 to 215 (PEEH…KSVF), 232 to 317 (PADI…ARVY), 322 to 398 (PEWV…AELK), 404 to 491 (PTFE…GVLE), and 496 to 592 (TRIT…LVVR). Disulfide bonds link Cys57–Cys106 and Cys150–Cys203. N-linked (GlcNAc...) asparagine glycans are attached at residues Asn200 and Asn249. Residues Cys254 and Cys301 are joined by a disulfide bond. N-linked (GlcNAc...) asparagine glycosylation occurs at Asn329. Cystine bridges form between Cys343-Cys382 and Cys427-Cys475. N-linked (GlcNAc...) asparagine glycans are attached at residues Asn448, Asn464, Asn485, and Asn512. The cysteines at positions 517 and 574 are disulfide-linked. Asn582 carries N-linked (GlcNAc...) asparagine glycosylation. Fibronectin type-III domains follow at residues 597-695 (PPGG…TEGA), 700-797 (APSD…SAQD), 802-897 (VPTD…APPS), and 899-990 (RPRI…TAGV). The span at 679–689 (GTGEPSMPSQR) shows a compositional bias: polar residues. Residues 679–708 (GTGEPSMPSQRIRTEGAPPNVAPSDVGGGG) are disordered. Asn924 carries N-linked (GlcNAc...) asparagine glycosylation. Ser984 carries the GPI-anchor amidated serine lipid modification. Positions 985 to 1010 (GATAGVPTLLLGLVLPALGVLAYSGF) are cleaved as a propeptide — removed in mature form.

Belongs to the immunoglobulin superfamily. Contactin family. In terms of assembly, interacts with TNR.

The protein localises to the cell membrane. Mediates cell surface interactions during nervous system development. Interaction with TNR enhances the neurite outgrowth. This Gallus gallus (Chicken) protein is Contactin-1 (CNTN1).